Consider the following 426-residue polypeptide: Gamma-glutamyl phosphate reductase (426 aa).

The protein belongs to the gamma-glutamyl phosphate reductase family.

Its subcellular location is the cytoplasm. It catalyses the reaction L-glutamate 5-semialdehyde + phosphate + NADP(+) = L-glutamyl 5-phosphate + NADPH + H(+). It functions in the pathway amino-acid biosynthesis; L-proline biosynthesis; L-glutamate 5-semialdehyde from L-glutamate: step 2/2. Functionally, catalyzes the NADPH-dependent reduction of L-glutamate 5-phosphate into L-glutamate 5-semialdehyde and phosphate. The product spontaneously undergoes cyclization to form 1-pyrroline-5-carboxylate. This is Gamma-glutamyl phosphate reductase from Acidovorax ebreus (strain TPSY) (Diaphorobacter sp. (strain TPSY)).